The chain runs to 214 residues: UPF0301 protein blr1492 (214 aa).

The interval 1-22 is disordered; sequence MAPTGKRTGESTRSTGPAPPSS.

It belongs to the UPF0301 (AlgH) family.

This is UPF0301 protein blr1492 from Bradyrhizobium diazoefficiens (strain JCM 10833 / BCRC 13528 / IAM 13628 / NBRC 14792 / USDA 110).